Here is a 428-residue protein sequence, read N- to C-terminus: Histidine--tRNA ligase (428 aa).

The protein belongs to the class-II aminoacyl-tRNA synthetase family. Homodimer.

Its subcellular location is the cytoplasm. The catalysed reaction is tRNA(His) + L-histidine + ATP = L-histidyl-tRNA(His) + AMP + diphosphate + H(+). The sequence is that of Histidine--tRNA ligase from Thermosynechococcus vestitus (strain NIES-2133 / IAM M-273 / BP-1).